The primary structure comprises 643 residues: Conglutin alpha 2 (643 aa).

A signal peptide spans methionine 1–alanine 22. Intrachain disulfides connect cysteine 31/cysteine 64 and cysteine 107/cysteine 464. Residues leucine 36 to asparagine 261 enclose the Cupin type-1 1 domain. Disordered stretches follow at residues threonine 110–glutamine 142, proline 190–glycine 243, and proline 285–glycine 458. Residues glutamine 207 to glutamine 218 are compositionally biased toward low complexity. Basic and acidic residues-rich tracts occupy residues histidine 228–lysine 237 and proline 298–glutamate 313. The span at glutamate 314–glutamate 323 shows a compositional bias: acidic residues. Composition is skewed to basic and acidic residues over residues proline 324–glutamine 333 and glutamine 357–threonine 369. Residues arginine 422–glycine 433 are compositionally biased toward basic residues. Positions glutamate 470–serine 616 constitute a Cupin type-1 2 domain. Over residues asparagine 623–serine 632 the composition is skewed to polar residues. Residues asparagine 623–alanine 643 are disordered. The span at serine 634–alanine 643 shows a compositional bias: basic and acidic residues.

The protein belongs to the 11S seed storage protein (globulins) family. In terms of assembly, hexamer; each subunit is composed of an acidic and a basic chain derived from a single precursor and linked by a disulfide bond. Component of globulins complexes which accumulate in seeds.

Its function is as follows. Sulfur-rich seed storage protein. This protein found in the seeds of many leguminous and non-leguminous plants is the source of sulfur-containing amino acids in seed meals. The sequence is that of Conglutin alpha 2 from Lupinus angustifolius (Narrow-leaved blue lupine).